The primary structure comprises 128 residues: MNRALDDEVRRLLKIKNYMARKRVEFHRQEWFRYKKLGDAWRKPRGKHSKLREHLSRRPPIVDAGFRSPAKVRGMHPSGYYEVLVYNLKDIENIDPKIQAARIASSVGSRKREEIAKRCAELNIKVLN.

Belongs to the eukaryotic ribosomal protein eL32 family.

This Thermoplasma volcanium (strain ATCC 51530 / DSM 4299 / JCM 9571 / NBRC 15438 / GSS1) protein is Large ribosomal subunit protein eL32 (rpl32e).